The sequence spans 514 residues: 2,3-bisphosphoglycerate-independent phosphoglycerate mutase (514 aa).

2 residues coordinate Mn(2+): Asp14 and Ser64. The Phosphoserine intermediate role is filled by Ser64. Residues His125, 155–156 (RD), Arg187, Arg193, 263–266 (RADR), and Lys336 contribute to the substrate site. Positions 403, 407, 444, 445, and 463 each coordinate Mn(2+).

It belongs to the BPG-independent phosphoglycerate mutase family. Monomer. Requires Mn(2+) as cofactor.

It catalyses the reaction (2R)-2-phosphoglycerate = (2R)-3-phosphoglycerate. It participates in carbohydrate degradation; glycolysis; pyruvate from D-glyceraldehyde 3-phosphate: step 3/5. In terms of biological role, catalyzes the interconversion of 2-phosphoglycerate and 3-phosphoglycerate. This is 2,3-bisphosphoglycerate-independent phosphoglycerate mutase from Shewanella pealeana (strain ATCC 700345 / ANG-SQ1).